A 378-amino-acid chain; its full sequence is Manganese peroxidase 1 (378 aa).

Residues 1–21 form the signal peptide; the sequence is MAFKSLIAFVALAAAVRAAPT. 5 disulfides stabilise this stretch: C24–C36, C35–C310, C54–C138, C274–C340, and C362–C369. Residues E56 and E60 each coordinate Mn(2+). H67 acts as the Proton acceptor in catalysis. Residues D68, G83, D85, and S87 each contribute to the Ca(2+) site. N-linked (GlcNAc...) asparagine glycans are attached at residues N97 and N152. H194 contacts heme b. Residue S195 participates in Ca(2+) binding. D200 is a Mn(2+) binding site. Positions 212, 214, 217, and 219 each coordinate Ca(2+). An N-linked (GlcNAc...) asparagine glycan is attached at N238.

It belongs to the peroxidase family. Ligninase subfamily. Requires Ca(2+) as cofactor. The cofactor is heme b.

The protein resides in the secreted. The enzyme catalyses 2 Mn(2+) + H2O2 + 2 H(+) = 2 Mn(3+) + 2 H2O. Catalyzes the oxidation of Mn(2+) to Mn(3+). The latter, acting as a diffusible redox mediator, is capable of oxidizing a variety of lignin compounds. This chain is Manganese peroxidase 1 (MNP1), found in Phanerodontia chrysosporium (White-rot fungus).